The following is a 138-amino-acid chain: Putative nickel-responsive regulator (138 aa).

Ni(2+) is bound by residues histidine 76, histidine 87, histidine 89, and cysteine 95.

Belongs to the transcriptional regulatory CopG/NikR family. Ni(2+) is required as a cofactor.

Transcriptional regulator. This Pseudomonas putida (strain ATCC 47054 / DSM 6125 / CFBP 8728 / NCIMB 11950 / KT2440) protein is Putative nickel-responsive regulator.